We begin with the raw amino-acid sequence, 173 residues long: Putative metal-dependent hydrolase BT9727_2476 (173 aa).

Zn(2+) contacts are provided by His-65, His-156, and His-160.

This sequence belongs to the metal hydrolase YfiT family. As to quaternary structure, homodimer. It depends on Zn(2+) as a cofactor.

It localises to the cytoplasm. Its function is as follows. Possible metal-dependent hydrolase. The chain is Putative metal-dependent hydrolase BT9727_2476 from Bacillus thuringiensis subsp. konkukian (strain 97-27).